We begin with the raw amino-acid sequence, 186 residues long: Transcription factor FapR (186 aa).

This sequence belongs to the FapR family.

Transcriptional factor involved in regulation of membrane lipid biosynthesis by repressing genes involved in fatty acid and phospholipid metabolism. The protein is Transcription factor FapR of Staphylococcus epidermidis (strain ATCC 35984 / DSM 28319 / BCRC 17069 / CCUG 31568 / BM 3577 / RP62A).